We begin with the raw amino-acid sequence, 406 residues long: NADH-quinone oxidoreductase subunit D (406 aa).

This sequence belongs to the complex I 49 kDa subunit family. As to quaternary structure, NDH-1 is composed of 14 different subunits. Subunits NuoB, C, D, E, F, and G constitute the peripheral sector of the complex.

It is found in the cell inner membrane. The catalysed reaction is a quinone + NADH + 5 H(+)(in) = a quinol + NAD(+) + 4 H(+)(out). Functionally, NDH-1 shuttles electrons from NADH, via FMN and iron-sulfur (Fe-S) centers, to quinones in the respiratory chain. The immediate electron acceptor for the enzyme in this species is believed to be ubiquinone. Couples the redox reaction to proton translocation (for every two electrons transferred, four hydrogen ions are translocated across the cytoplasmic membrane), and thus conserves the redox energy in a proton gradient. The sequence is that of NADH-quinone oxidoreductase subunit D from Acidiphilium cryptum (strain JF-5).